The chain runs to 864 residues: MSKSAVSPMMQQYLGIKAQHTDKLVFYRMGDFYELFLDDAVEAAKLLDITLTTRGQMDGVPIKMAGVPFHAAEQYLARLVKLGKSVAICEQVGEVGAGKGPVERKVVRIVTPGTLTDSALLEDKETNRIVAVSPDKKYIGLAWASLQSGEFKTKLTTADKLNDELARLQAAEILLPDSKNAPQLQTASGVTRLNAWQFAADAGEKLLTEYFGCQDLRGFGLDSKEHAVSIGAAGALLNYIRLTQNLMPQHLDGLSLETDSQYIGMDAATRRNLEITQTLSGKKTPTLFSILDGCATHMGSRLLALWLHHPLRNRAHIRARQEAVTALESQYEPLQCHLKSIADIERIAARIAVGNARPRDLASLRDSLFELAQIDLSATGSSLLETLKAVFPETLPVAETLKAAVMPEPSVWLKDGNVINHGFHPELDELRRIQNHGDEFLLDLEAKERERTGLSTLKVEFNRVHGFYIELSKTQAEQAPADYQRRQTLKNAERFITPELKAFEDKVLTAQDQALALEKQLFDGVLKNLRTALPQLQKAAKAAAALDVLSTFSALAKERNFVRPEFADYPVVHIENGRHPVVEQQVRHFTANHTDLDHKHRLMLLTGPNMGGKSTYMRQVALIVLLAHTGCFVPADAATIGPVDQIFTRIGASDDLASNRSTFMVEMSETAYILHHATEQSIVLMDEVGRGTSTFDGLALAHAIAEHLLQKNKSFSLFATHYFELTYLPEAHAAAVNMHLSALEQGRDIVFLHQIQPGPAGKSYGIAVAKLAGLPVRALKAAQKHLNGLENQAAANRPQLDIFSTMPSEKGDEPNVDCFVDKAEEKHFEGILAAALENLDPDSLTPREALSELYRLKDLCKSVS.

607 to 614 contributes to the ATP binding site; it reads GPNMGGKS.

The protein belongs to the DNA mismatch repair MutS family.

In terms of biological role, this protein is involved in the repair of mismatches in DNA. It is possible that it carries out the mismatch recognition step. This protein has a weak ATPase activity. This chain is DNA mismatch repair protein MutS, found in Neisseria gonorrhoeae (strain ATCC 700825 / FA 1090).